A 147-amino-acid chain; its full sequence is Pathogenesis-related protein PR-4A (147 aa).

The first 25 residues, 1-25, serve as a signal peptide directing secretion; sequence MERVNNYKLCVALLIISMVMAMAAA. The region spanning 26-147 is the Barwin domain; the sequence is QSATNVRSTY…VNYEFVNCND (122 aa). 3 cysteine pairs are disulfide-bonded: cysteine 54/cysteine 86, cysteine 75/cysteine 109, and cysteine 89/cysteine 145.

The protein localises to the secreted. It is found in the cell wall. The chain is Pathogenesis-related protein PR-4A from Nicotiana tabacum (Common tobacco).